A 484-amino-acid polypeptide reads, in one-letter code: Glutamate--tRNA ligase (484 aa).

A 'HIGH' region motif is present at residues 11-21 (PSPTGYLHIGN). Positions 252–256 (KLSKR) match the 'KMSKS' region motif. Residue K255 participates in ATP binding.

Belongs to the class-I aminoacyl-tRNA synthetase family. Glutamate--tRNA ligase type 1 subfamily. Monomer.

The protein localises to the cytoplasm. It carries out the reaction tRNA(Glu) + L-glutamate + ATP = L-glutamyl-tRNA(Glu) + AMP + diphosphate. Functionally, catalyzes the attachment of glutamate to tRNA(Glu) in a two-step reaction: glutamate is first activated by ATP to form Glu-AMP and then transferred to the acceptor end of tRNA(Glu). This is Glutamate--tRNA ligase from Staphylococcus aureus (strain Mu3 / ATCC 700698).